A 46-amino-acid polypeptide reads, in one-letter code: Large ribosomal subunit protein bL34 (46 aa).

The tract at residues 25–46 is disordered; that stretch reads TASGRQVLRRRRAKGRYRLAVS. Residues 31–46 show a composition bias toward basic residues; it reads VLRRRRAKGRYRLAVS.

Belongs to the bacterial ribosomal protein bL34 family.

The sequence is that of Large ribosomal subunit protein bL34 from Synechococcus sp. (strain JA-3-3Ab) (Cyanobacteria bacterium Yellowstone A-Prime).